Consider the following 86-residue polypeptide: Small ribosomal subunit protein bS20 (86 aa).

The segment covering 1–22 (MANIKSAKKRAVQSEKRRKHNA) has biased composition (basic residues). Residues 1–28 (MANIKSAKKRAVQSEKRRKHNASGRSMM) form a disordered region.

Belongs to the bacterial ribosomal protein bS20 family.

Its function is as follows. Binds directly to 16S ribosomal RNA. This is Small ribosomal subunit protein bS20 from Serratia proteamaculans (strain 568).